The following is a 143-amino-acid chain: Peptide methionine sulfoxide reductase MsrB (143 aa).

The MsrB domain occupies 5–126 (KEEKIKSLNR…NSAALRFVPK (122 aa)). The active-site Nucleophile is the C115.

Belongs to the MsrB Met sulfoxide reductase family.

It carries out the reaction L-methionyl-[protein] + [thioredoxin]-disulfide + H2O = L-methionyl-(R)-S-oxide-[protein] + [thioredoxin]-dithiol. This Bacillus subtilis (strain 168) protein is Peptide methionine sulfoxide reductase MsrB.